The following is a 288-amino-acid chain: DNA repair protein RecO (288 aa).

This sequence belongs to the RecO family.

Functionally, involved in DNA repair and RecF pathway recombination. This is DNA repair protein RecO from Trichodesmium erythraeum (strain IMS101).